Here is a 716-residue protein sequence, read N- to C-terminus: Polyribonucleotide nucleotidyltransferase (716 aa).

Asp-493 and Asp-499 together coordinate Mg(2+). Residues Pro-560–Ile-619 enclose the KH domain. In terms of domain architecture, S1 motif spans Gly-629–Lys-697.

This sequence belongs to the polyribonucleotide nucleotidyltransferase family. Requires Mg(2+) as cofactor.

It localises to the cytoplasm. It catalyses the reaction RNA(n+1) + phosphate = RNA(n) + a ribonucleoside 5'-diphosphate. Functionally, involved in mRNA degradation. Catalyzes the phosphorolysis of single-stranded polyribonucleotides processively in the 3'- to 5'-direction. This Paraburkholderia xenovorans (strain LB400) protein is Polyribonucleotide nucleotidyltransferase.